We begin with the raw amino-acid sequence, 679 residues long: UvrABC system protein B (679 aa).

Positions 25-176 (EGVNGGERYQ…NLRGSLRDLV (152 aa)) constitute a Helicase ATP-binding domain. 38–45 (GATGTGKT) contributes to the ATP binding site. Residues 91-114 (YYDYYQPEAYVPVSDTYIAKTASI) carry the Beta-hairpin motif. Positions 429–591 (QVDDLLGEIR…ITPTAAGKKA (163 aa)) constitute a Helicase C-terminal domain. The UVR domain occupies 638-673 (PELIDQLELKMKESAKKLDFEEAANLRDRIKKLRQK).

It belongs to the UvrB family. In terms of assembly, forms a heterotetramer with UvrA during the search for lesions. Interacts with UvrC in an incision complex.

The protein localises to the cytoplasm. Functionally, the UvrABC repair system catalyzes the recognition and processing of DNA lesions. A damage recognition complex composed of 2 UvrA and 2 UvrB subunits scans DNA for abnormalities. Upon binding of the UvrA(2)B(2) complex to a putative damaged site, the DNA wraps around one UvrB monomer. DNA wrap is dependent on ATP binding by UvrB and probably causes local melting of the DNA helix, facilitating insertion of UvrB beta-hairpin between the DNA strands. Then UvrB probes one DNA strand for the presence of a lesion. If a lesion is found the UvrA subunits dissociate and the UvrB-DNA preincision complex is formed. This complex is subsequently bound by UvrC and the second UvrB is released. If no lesion is found, the DNA wraps around the other UvrB subunit that will check the other stand for damage. This chain is UvrABC system protein B, found in Synechococcus sp. (strain CC9311).